A 128-amino-acid polypeptide reads, in one-letter code: uncharacterized protein (128 aa).

High expression in pituitary gland and weak in pancreas.

This is an uncharacterized protein from Homo sapiens (Human).